Reading from the N-terminus, the 499-residue chain is Aspartyl/glutamyl-tRNA(Asn/Gln) amidotransferase subunit B (499 aa).

It belongs to the GatB/GatE family. GatB subfamily. As to quaternary structure, heterotrimer of A, B and C subunits.

It carries out the reaction L-glutamyl-tRNA(Gln) + L-glutamine + ATP + H2O = L-glutaminyl-tRNA(Gln) + L-glutamate + ADP + phosphate + H(+). It catalyses the reaction L-aspartyl-tRNA(Asn) + L-glutamine + ATP + H2O = L-asparaginyl-tRNA(Asn) + L-glutamate + ADP + phosphate + 2 H(+). Functionally, allows the formation of correctly charged Asn-tRNA(Asn) or Gln-tRNA(Gln) through the transamidation of misacylated Asp-tRNA(Asn) or Glu-tRNA(Gln) in organisms which lack either or both of asparaginyl-tRNA or glutaminyl-tRNA synthetases. The reaction takes place in the presence of glutamine and ATP through an activated phospho-Asp-tRNA(Asn) or phospho-Glu-tRNA(Gln). The polypeptide is Aspartyl/glutamyl-tRNA(Asn/Gln) amidotransferase subunit B (Bartonella tribocorum (strain CIP 105476 / IBS 506)).